The sequence spans 129 residues: Small ribosomal subunit protein uS11 (129 aa).

The protein belongs to the universal ribosomal protein uS11 family. Part of the 30S ribosomal subunit. Interacts with proteins S7 and S18. Binds to IF-3.

Located on the platform of the 30S subunit, it bridges several disparate RNA helices of the 16S rRNA. Forms part of the Shine-Dalgarno cleft in the 70S ribosome. This Histophilus somni (strain 129Pt) (Haemophilus somnus) protein is Small ribosomal subunit protein uS11.